A 105-amino-acid polypeptide reads, in one-letter code: Thioredoxin (105 aa).

The Thioredoxin domain maps to 1–105 (ATMTLTDANF…LEAQLADVLQ (105 aa)). An intrachain disulfide couples Cys-29 to Cys-32.

Functionally, participates in various redox reactions through the reversible oxidation of its active center dithiol to a disulfide and catalyzes dithiol-disulfide exchange reactions. The sequence is that of Thioredoxin (trxA) from Alicyclobacillus acidocaldarius subsp. acidocaldarius (Bacillus acidocaldarius).